The sequence spans 273 residues: 5-deoxy-glucuronate isomerase (273 aa).

This sequence belongs to the isomerase IolB family.

The enzyme catalyses 5-deoxy-D-glucuronate = 5-dehydro-2-deoxy-D-gluconate. The protein operates within polyol metabolism; myo-inositol degradation into acetyl-CoA; acetyl-CoA from myo-inositol: step 4/7. In terms of biological role, involved in the isomerization of 5-deoxy-glucuronate (5DG) to 5-dehydro-2-deoxy-D-gluconate (DKG or 2-deoxy-5-keto-D-gluconate). The polypeptide is 5-deoxy-glucuronate isomerase (Listeria monocytogenes serotype 4a (strain HCC23)).